The primary structure comprises 168 residues: ATP synthase subunit b (168 aa).

A helical membrane pass occupies residues 10–30 (LYLGDMLFYLVSFLIMAALVW). Residues 61–80 (EAQKLAAKRQEELKGSRQEA) form a disordered region.

It belongs to the ATPase B chain family. As to quaternary structure, F-type ATPases have 2 components, F(1) - the catalytic core - and F(0) - the membrane proton channel. F(1) has five subunits: alpha(3), beta(3), gamma(1), delta(1), epsilon(1). F(0) has three main subunits: a(1), b(2) and c(10-14). The alpha and beta chains form an alternating ring which encloses part of the gamma chain. F(1) is attached to F(0) by a central stalk formed by the gamma and epsilon chains, while a peripheral stalk is formed by the delta and b chains.

The protein localises to the cell membrane. In terms of biological role, f(1)F(0) ATP synthase produces ATP from ADP in the presence of a proton or sodium gradient. F-type ATPases consist of two structural domains, F(1) containing the extramembraneous catalytic core and F(0) containing the membrane proton channel, linked together by a central stalk and a peripheral stalk. During catalysis, ATP synthesis in the catalytic domain of F(1) is coupled via a rotary mechanism of the central stalk subunits to proton translocation. Component of the F(0) channel, it forms part of the peripheral stalk, linking F(1) to F(0). This is ATP synthase subunit b from Limosilactobacillus fermentum (strain NBRC 3956 / LMG 18251) (Lactobacillus fermentum).